The chain runs to 274 residues: 3-methyl-2-oxobutanoate hydroxymethyltransferase (274 aa).

Positions 44 and 83 each coordinate Mg(2+). Residues Asp44–Ser45, Asp83, and Lys113 contribute to the 3-methyl-2-oxobutanoate site. Glu115 serves as a coordination point for Mg(2+). Glu182 serves as the catalytic Proton acceptor.

Belongs to the PanB family. In terms of assembly, homodecamer; pentamer of dimers. It depends on Mg(2+) as a cofactor.

Its subcellular location is the cytoplasm. The catalysed reaction is 3-methyl-2-oxobutanoate + (6R)-5,10-methylene-5,6,7,8-tetrahydrofolate + H2O = 2-dehydropantoate + (6S)-5,6,7,8-tetrahydrofolate. It participates in cofactor biosynthesis; (R)-pantothenate biosynthesis; (R)-pantoate from 3-methyl-2-oxobutanoate: step 1/2. Its function is as follows. Catalyzes the reversible reaction in which hydroxymethyl group from 5,10-methylenetetrahydrofolate is transferred onto alpha-ketoisovalerate to form ketopantoate. This chain is 3-methyl-2-oxobutanoate hydroxymethyltransferase, found in Campylobacter jejuni subsp. jejuni serotype O:23/36 (strain 81-176).